The sequence spans 64 residues: Alpha-conotoxin-like Lp1.7 (64 aa).

The first 21 residues, 1 to 21, serve as a signal peptide directing secretion; sequence MGMRMMFTMFLLVVLTTTVVS. A propeptide spanning residues 22 to 41 is cleaved from the precursor; that stretch reads FNSDRESNHENRRTSNQITR. Cystine bridges form between Cys47–Cys53 and Cys48–Cys61. The segment at 49–51 is lacks the Ser-Xaa-Pro motif that is crucial for potent interaction with nAChR; sequence DDP.

This sequence belongs to the conotoxin A superfamily. As to expression, expressed by the venom duct.

It is found in the secreted. Its function is as follows. Alpha-conotoxins act on postsynaptic membranes, they bind to the nicotinic acetylcholine receptors (nAChR) and thus inhibit them. Has possibly a distinct nAChR binding mode from other alpha-conotoxins, due to a different three residue motif (lacks the Ser-Xaa-Pro motif). The polypeptide is Alpha-conotoxin-like Lp1.7 (Conus leopardus (Leopard cone)).